A 77-amino-acid chain; its full sequence is Acyl carrier protein (77 aa).

One can recognise a Carrier domain in the interval 2–77 (AEVFDRVKEI…DAVDYINSKA (76 aa)). S37 carries the O-(pantetheine 4'-phosphoryl)serine modification.

Belongs to the acyl carrier protein (ACP) family. Post-translationally, 4'-phosphopantetheine is transferred from CoA to a specific serine of apo-ACP by AcpS. This modification is essential for activity because fatty acids are bound in thioester linkage to the sulfhydryl of the prosthetic group.

The protein localises to the cytoplasm. Its pathway is lipid metabolism; fatty acid biosynthesis. Carrier of the growing fatty acid chain in fatty acid biosynthesis. The protein is Acyl carrier protein of Oceanobacillus iheyensis (strain DSM 14371 / CIP 107618 / JCM 11309 / KCTC 3954 / HTE831).